The sequence spans 242 residues: Ribonuclease 3 (242 aa).

Positions 14-142 constitute an RNase III domain; it reads LRRFAARFAL…VIGALYLSTG (129 aa). Residue glutamate 56 participates in Mg(2+) binding. Residue aspartate 60 is part of the active site. Positions 128 and 131 each coordinate Mg(2+). Residue glutamate 131 is part of the active site. A DRBM domain is found at 170 to 235; sequence NHKSALQELT…ARGAYAALRS (66 aa).

It belongs to the ribonuclease III family. In terms of assembly, homodimer. Mg(2+) serves as cofactor.

The protein localises to the cytoplasm. It catalyses the reaction Endonucleolytic cleavage to 5'-phosphomonoester.. Digests double-stranded RNA. Involved in the processing of primary rRNA transcript to yield the immediate precursors to the large and small rRNAs (23S and 16S). Processes some mRNAs, and tRNAs when they are encoded in the rRNA operon. Processes pre-crRNA and tracrRNA of type II CRISPR loci if present in the organism. The protein is Ribonuclease 3 of Gloeobacter violaceus (strain ATCC 29082 / PCC 7421).